The sequence spans 109 residues: MIKLKVKKGDEVVVITGKHKGKKGKILKVFPEDSKVIVFGVNLVKKHTKSNQMSEGGIITKELPIHISNIAHIDPKTGNPTKVAFKFLEDGSKVRVAKKSGEIIGKEGK.

This sequence belongs to the universal ribosomal protein uL24 family. In terms of assembly, part of the 50S ribosomal subunit.

In terms of biological role, one of two assembly initiator proteins, it binds directly to the 5'-end of the 23S rRNA, where it nucleates assembly of the 50S subunit. Functionally, one of the proteins that surrounds the polypeptide exit tunnel on the outside of the subunit. The protein is Large ribosomal subunit protein uL24 of Rickettsia massiliae (strain Mtu5).